The following is a 390-amino-acid chain: Tuftelin (390 aa).

Coiled coils occupy residues 88 to 126 and 162 to 351; these read DKMI…KLDR and DTCI…IEKQ. A disordered region spans residues 358–390; the sequence is STQARAKTENPGSIRISKPPSPKPMPVIRVVET.

Belongs to the tuftelin family. Interacts with TFIP11. Expressed in the epidermis (at protein level). Present in the extracellular enamel and is mainly associated with the crystal component.

The protein resides in the secreted. Involved in the structural organization of the epidermis. Involved in the mineralization and structural organization of enamel. In Homo sapiens (Human), this protein is Tuftelin (TUFT1).